The sequence spans 244 residues: 3-oxoacyl-[acyl-carrier-protein] reductase FabG (244 aa).

NADP(+)-binding positions include 12–15 (GASR), Thr37, 59–60 (NV), and Asn86. Residue Ser138 participates in substrate binding. The active-site Proton acceptor is Tyr151. Residues 151 to 155 (YAAAK) and Ile184 each bind NADP(+).

Belongs to the short-chain dehydrogenases/reductases (SDR) family. In terms of assembly, homotetramer.

It carries out the reaction a (3R)-hydroxyacyl-[ACP] + NADP(+) = a 3-oxoacyl-[ACP] + NADPH + H(+). The protein operates within lipid metabolism; fatty acid biosynthesis. In terms of biological role, catalyzes the NADPH-dependent reduction of beta-ketoacyl-ACP substrates to beta-hydroxyacyl-ACP products, the first reductive step in the elongation cycle of fatty acid biosynthesis. The chain is 3-oxoacyl-[acyl-carrier-protein] reductase FabG (fabG) from Vibrio cholerae serotype O1 (strain ATCC 39315 / El Tor Inaba N16961).